Consider the following 164-residue polypeptide: 4-hydroxy-4-methyl-2-oxoglutarate aldolase (164 aa).

Residues glycine 74 to leucine 77 and arginine 96 each bind substrate. Residue aspartate 97 coordinates a divalent metal cation.

The protein belongs to the class II aldolase/RraA-like family. Homotrimer. The cofactor is Ni(2+). Co(2+) serves as cofactor. Zn(2+) is required as a cofactor.

The enzyme catalyses 4-hydroxy-4-methyl-2-oxoglutarate = 2 pyruvate. It catalyses the reaction oxaloacetate + H(+) = pyruvate + CO2. Its activity is regulated as follows. Competitively inhibited by oxalate, a pyruvate enolate analog. Functionally, catalyzes the aldol cleavage of 4-hydroxy-4-methyl-2-oxoglutarate (HMG) into 2 molecules of pyruvate. Also contains a secondary oxaloacetate (OAA) decarboxylase activity due to the common pyruvate enolate transition state formed following C-C bond cleavage in the retro-aldol and decarboxylation reactions. The protein is 4-hydroxy-4-methyl-2-oxoglutarate aldolase of Thermus thermophilus (strain ATCC 27634 / DSM 579 / HB8).